Reading from the N-terminus, the 195-residue chain is Probable prefoldin subunit 3 (195 aa).

It belongs to the prefoldin subunit alpha family. As to quaternary structure, heterohexamer of two PFD-alpha type and four PFD-beta type subunits.

Functionally, binds specifically to cytosolic chaperonin (c-CPN) and transfers target proteins to it. Binds to nascent polypeptide chain and promotes folding in an environment in which there are many competing pathways for nonnative proteins. The sequence is that of Probable prefoldin subunit 3 (pfdn3) from Dictyostelium discoideum (Social amoeba).